A 345-amino-acid chain; its full sequence is Phosphoribosylformylglycinamidine cyclo-ligase (345 aa).

The protein belongs to the AIR synthase family.

The protein resides in the cytoplasm. It catalyses the reaction 2-formamido-N(1)-(5-O-phospho-beta-D-ribosyl)acetamidine + ATP = 5-amino-1-(5-phospho-beta-D-ribosyl)imidazole + ADP + phosphate + H(+). The protein operates within purine metabolism; IMP biosynthesis via de novo pathway; 5-amino-1-(5-phospho-D-ribosyl)imidazole from N(2)-formyl-N(1)-(5-phospho-D-ribosyl)glycinamide: step 2/2. This chain is Phosphoribosylformylglycinamidine cyclo-ligase, found in Bifidobacterium longum subsp. infantis (strain ATCC 15697 / DSM 20088 / JCM 1222 / NCTC 11817 / S12).